A 272-amino-acid polypeptide reads, in one-letter code: Undecaprenyl-diphosphatase (272 aa).

Transmembrane regions (helical) follow at residues 2–22 (FDIIKAVIIGIVEGLTEFLPI), 43–63 (FINMFEYVIQFGAILAVILLY), 82–102 (WQLWAKVIIAVLPSVVVGLPL), 110–130 (LHTPLVVATTLIIYGVLFIIL), 185–205 (YVATEFSFFLAIPTMVGVSIL), 224–244 (VLMTGSIVSFLVAIVAIKWLL), and 252–272 (FKPFGWYRIALGAIVLLVMFI).

The protein belongs to the UppP family.

It is found in the cell membrane. The enzyme catalyses di-trans,octa-cis-undecaprenyl diphosphate + H2O = di-trans,octa-cis-undecaprenyl phosphate + phosphate + H(+). Catalyzes the dephosphorylation of undecaprenyl diphosphate (UPP). Confers resistance to bacitracin. This is Undecaprenyl-diphosphatase from Lacticaseibacillus paracasei (strain ATCC 334 / BCRC 17002 / CCUG 31169 / CIP 107868 / KCTC 3260 / NRRL B-441) (Lactobacillus paracasei).